Consider the following 1430-residue polypeptide: DNA-directed RNA polymerase subunit beta' (1430 aa).

Zn(2+) contacts are provided by Cys-71, Cys-73, Cys-86, and Cys-89. Mg(2+) is bound by residues Asp-461, Asp-463, and Asp-465. Zn(2+) contacts are provided by Cys-815, Cys-889, Cys-896, and Cys-899. The segment at Arg-1388–Glu-1430 is disordered. A compositionally biased stretch (low complexity) spans Ala-1392–Glu-1405.

It belongs to the RNA polymerase beta' chain family. As to quaternary structure, the RNAP catalytic core consists of 2 alpha, 1 beta, 1 beta' and 1 omega subunit. When a sigma factor is associated with the core the holoenzyme is formed, which can initiate transcription. The cofactor is Mg(2+). It depends on Zn(2+) as a cofactor.

The enzyme catalyses RNA(n) + a ribonucleoside 5'-triphosphate = RNA(n+1) + diphosphate. Its function is as follows. DNA-dependent RNA polymerase catalyzes the transcription of DNA into RNA using the four ribonucleoside triphosphates as substrates. The polypeptide is DNA-directed RNA polymerase subunit beta' (Halorhodospira halophila (strain DSM 244 / SL1) (Ectothiorhodospira halophila (strain DSM 244 / SL1))).